The primary structure comprises 358 residues: MKQIQVNLGVRSYPIYIGQNLMSDGETLSRYLLKKRILIVTNETVAPLYLKQIQETMASFGEVESVILPDGEQFKDLAHLDTIFTALLQQNYGRDSVLVALGGGVIGDMTGFAAACYQRGIDFIQIPTTLLSQVDSSVGGKTAVNHPLGKNMIGAFYQPQIVLIDTLCLHTLPAREFAAGMAEVIKYGIMWDADFFQWLEDNVTTLKTLDAQALVYAISRCCEIKADVVSQDETEQGVRALLNLGHTFGHAIEAEMGYGNWLHGEAVSAGTVLAAQTAKALGLIDESIVCRIIQLLQAFDLPVSAPESMDFDSFIQHMRRDKKVLGGQIRLVLPTAIGRADVFSQVTESTLEQVIRCA.

NAD(+) is bound by residues 70-75 (DGEQFK), 104-108 (GVIGD), 128-129 (TT), Lys-141, Lys-150, and 168-171 (CLHT). Residues Glu-183, His-246, and His-263 each contribute to the Zn(2+) site.

It belongs to the sugar phosphate cyclases superfamily. Dehydroquinate synthase family. The cofactor is Co(2+). Requires Zn(2+) as cofactor. It depends on NAD(+) as a cofactor.

Its subcellular location is the cytoplasm. The enzyme catalyses 7-phospho-2-dehydro-3-deoxy-D-arabino-heptonate = 3-dehydroquinate + phosphate. It participates in metabolic intermediate biosynthesis; chorismate biosynthesis; chorismate from D-erythrose 4-phosphate and phosphoenolpyruvate: step 2/7. Its function is as follows. Catalyzes the conversion of 3-deoxy-D-arabino-heptulosonate 7-phosphate (DAHP) to dehydroquinate (DHQ). The protein is 3-dehydroquinate synthase of Shewanella baltica (strain OS185).